The following is a 284-amino-acid chain: Diaminopimelate epimerase (284 aa).

Positions 13 and 70 each coordinate substrate. The Proton donor role is filled by cysteine 79. Residues 80 to 81, asparagine 167, asparagine 200, and 218 to 219 each bind substrate; these read GN and ER. Catalysis depends on cysteine 227, which acts as the Proton acceptor. 228 to 229 contributes to the substrate binding site; sequence GT.

The protein belongs to the diaminopimelate epimerase family. As to quaternary structure, homodimer.

It localises to the cytoplasm. The enzyme catalyses (2S,6S)-2,6-diaminopimelate = meso-2,6-diaminopimelate. It functions in the pathway amino-acid biosynthesis; L-lysine biosynthesis via DAP pathway; DL-2,6-diaminopimelate from LL-2,6-diaminopimelate: step 1/1. Its function is as follows. Catalyzes the stereoinversion of LL-2,6-diaminopimelate (L,L-DAP) to meso-diaminopimelate (meso-DAP), a precursor of L-lysine and an essential component of the bacterial peptidoglycan. This Prochlorococcus marinus (strain NATL1A) protein is Diaminopimelate epimerase.